Reading from the N-terminus, the 316-residue chain is MFGFIEGVFLVLTITEFILGNLVNGFIVSINSSYWFKSKKISLSNFIITSLALFRIFLLWIIFIDSLIIVFSYQTHDSGIMMQLIDVFWTFTNHFSIWLISCLSVFYCLKIASFSHPSFLWLKWRASRVVVGMLWGALLLSCVSTMSLMNEFKIYSALTRSKDTPNMTEYIRLKRQEYNLMHVLGNLWKIPSLIVSLVAYLLLLLSLGKHTQQMQQYSIDSRDQSAEAHKRAMRIISSFLLFFLFYFLSFMILSSSRFLPETRIARIIGVVISMSYLVGDSFILIVCNNKLKHTFVAMLPCECGHLKPGSKGPSAS.

The Extracellular segment spans residues 1–7 (MFGFIEG). Residues 8 to 28 (VFLVLTITEFILGNLVNGFIV) form a helical membrane-spanning segment. Over 29-50 (SINSSYWFKSKKISLSNFIITS) the chain is Cytoplasmic. A helical membrane pass occupies residues 51 to 71 (LALFRIFLLWIIFIDSLIIVF). Topologically, residues 72–86 (SYQTHDSGIMMQLID) are extracellular. A helical membrane pass occupies residues 87–107 (VFWTFTNHFSIWLISCLSVFY). Residues 108–128 (CLKIASFSHPSFLWLKWRASR) are Cytoplasmic-facing. Residues 129–149 (VVVGMLWGALLLSCVSTMSLM) form a helical membrane-spanning segment. Residues 150–186 (NEFKIYSALTRSKDTPNMTEYIRLKRQEYNLMHVLGN) lie on the Extracellular side of the membrane. Asn166 carries an N-linked (GlcNAc...) asparagine glycan. The chain crosses the membrane as a helical span at residues 187 to 207 (LWKIPSLIVSLVAYLLLLLSL). Topologically, residues 208–234 (GKHTQQMQQYSIDSRDQSAEAHKRAMR) are cytoplasmic. Residues 235–255 (IISSFLLFFLFYFLSFMILSS) form a helical membrane-spanning segment. The Extracellular portion of the chain corresponds to 256-266 (SRFLPETRIAR). The chain crosses the membrane as a helical span at residues 267–287 (IIGVVISMSYLVGDSFILIVC). Over 288-316 (NNKLKHTFVAMLPCECGHLKPGSKGPSAS) the chain is Cytoplasmic.

This sequence belongs to the G-protein coupled receptor T2R family.

It is found in the membrane. In terms of biological role, gustducin-coupled receptor implicated in the perception of bitter compounds in the oral cavity and the gastrointestinal tract. Signals through PLCB2 and the calcium-regulated cation channel TRPM5. The chain is Taste receptor type 2 member 3 (Tas2r3) from Mus musculus (Mouse).